The following is a 1175-amino-acid chain: uncharacterized protein (1175 aa).

Residue 586–593 (GPAGTGKT) coordinates ATP.

This is an uncharacterized protein from Methanocaldococcus jannaschii (strain ATCC 43067 / DSM 2661 / JAL-1 / JCM 10045 / NBRC 100440) (Methanococcus jannaschii).